The following is a 472-amino-acid chain: Replicative helicase loading/DNA remodeling protein DnaB (472 aa).

A DDBH1 region spans residues 1-112; sequence MADYWKDVLP…ERLFIYELLP (112 aa). The tract at residues 210 to 302 is DDBH2-1; the sequence is DLFLAGLSET…VHLREGEQPA (93 aa). Residues 303-411 are DDBH2-2; the sequence is EEDSLDGKLI…RQYLEWAEGK (109 aa). The segment at 415 to 472 is disordered; sequence SKRNQKVIREEKLPDWMTEKETASDSESGQQKLHPQDLEEQKKKMMEEMQKLKKYSAY. 2 stretches are compositionally biased toward basic and acidic residues: residues 421 to 437 and 448 to 465; these read VIRE…KETA and HPQD…EMQK.

This sequence belongs to the DnaB/DnaD family. Homotetramer. Also forms higher-order oligomers, can be induced by some ssDNA. The DNA replisome assembles sequentially on oriC in this order; DnaA, DnaD, DnaB, DnaI-DnaC helicase. In atomic force microscopy forms a square with a small central hole. Part of the replication restart primosome which assembles in this order; PriA, DnaD then DnaB. The preferred DNA substrate mimics an arrested DNA replication fork with unreplicated lagging strand. Interacts with DnaC, but probably not as a tetramer. Interacts with DnaD but no interaction with PriA was seen. Interacts with cell cycle regulator CcrZ. In early growth phase only full-length protein is detected, during late growth and stationary phase full-length and C-terminally truncated proteins are seen (at protein level). Truncated protein is only seen in cytoplasmic fractions.

The protein localises to the cytoplasm. The protein resides in the cell membrane. Helps DnaI load the DnaC replicative helicase onto single-stranded (ss)DNA. During DNA replication from the origin of replication (oriC) in the DNA replisome, DnaD is required after DnaA, before DnaB and before subsequent helicase DnaC loading. Component of the replication restart primosome, which reloads the replicative helicase on sites other than oriC. DnaB, DnaD and DnaI may also be required for a PriA-independent pathway of replication fork restart. DnaB and DnaD work together to allow DnaB access to ssDNA. DNA replication at oriC might originate on the inner face of the cell membrane; DnaB is essential for both replication initiation and cell membrane attachment of the origin region of the chromosome and plasmids. Weakly binds ssDNA, preferentially binds double-stranded (ds)DNA, and replication fork-like substrates. Remodels DNA, laterally compacts supercoiled plasmid and linear DNA, forms beads along the dsDNA. Together DnaB and DnaD form bipolar complexes on plasmid DNA. DnaB and DnaD are also required to load helicase on the repN plasmid origin of replication (oriN). In Bacillus subtilis (strain 168), this protein is Replicative helicase loading/DNA remodeling protein DnaB.